We begin with the raw amino-acid sequence, 1357 residues long: Kinectin (1357 aa).

The Cytoplasmic portion of the chain corresponds to 1 to 6 (MEFYES). The chain crosses the membrane as a helical; Signal-anchor for type II membrane protein span at residues 7-29 (AYFIVLIPSIVITVIFLFFWLFM). The Lumenal segment spans residues 30 to 1357 (KETLYDEVLA…KEKEHYQVLE (1328 aa)). Disordered stretches follow at residues 48–81 (IPTKTDKKKAEKKKNKKKEIQNGNLHESDSESVP) and 103–218 (NVVE…KQKT). Ser75 bears the Phosphoserine; by FAM20C mark. At Ser77 the chain carries Phosphoserine. A compositionally biased stretch (basic and acidic residues) spans 121 to 135 (QKPVLEEQVIKESDA). A Phosphothreonine modification is found at Thr153. Ser156 bears the Phosphoserine mark. The span at 161–171 (SKKKPGQKKSK) shows a compositional bias: basic residues. N-linked (GlcNAc...) asparagine glycosylation is found at Asn172, Asn435, Asn772, Asn904, and Asn1055. Over residues 172–182 (NGSDDQDKKVE) the composition is skewed to basic and acidic residues. Positions 330–1356 (LIHQLQEKDK…TKEKEHYQVL (1027 aa)) form a coiled coil. Ser1084 carries the phosphoserine modification. Residues Asn1088 and Asn1263 are each glycosylated (N-linked (GlcNAc...) asparagine). A Phosphoserine modification is found at Ser1313. An N-linked (GlcNAc...) asparagine glycan is attached at Asn1329.

It belongs to the kinectin family. Parallel homodimers formed between the membrane-bound and the cytosolic form, and also between 2 cytosolic forms. High levels in peripheral blood lymphocytes, testis and ovary, lower levels in spleen, thymus, prostate, small intestine and colon.

It localises to the endoplasmic reticulum membrane. Functionally, receptor for kinesin thus involved in kinesin-driven vesicle motility. Accumulates in integrin-based adhesion complexes (IAC) upon integrin aggregation by fibronectin. This is Kinectin (KTN1) from Homo sapiens (Human).